Reading from the N-terminus, the 1012-residue chain is Ubiquitin-activating enzyme E1 1 (1012 aa).

Residue arginine 22 participates in ATP binding. At serine 264 the chain carries Phosphoserine. 2 residues coordinate ATP: alanine 437 and aspartate 463. The Mg(2+) site is built by aspartate 465 and glutamate 468. ATP is bound by residues asparagine 471, arginine 474, lysine 487, valine 513, aspartate 537, and asparagine 538. Aspartate 537 is a Mg(2+) binding site. A Glycyl lysine isopeptide (Lys-Gly) (interchain with G-Cter in ubiquitin) cross-link involves residue lysine 588. Cysteine 593 serves as the catalytic Glycyl thioester intermediate. The residue at position 903 (serine 903) is a Phosphoserine.

It belongs to the ubiquitin-activating E1 family. In terms of assembly, monomer. Interacts with the E2 ubiquitin-conjugating enzyme ubc4.

It localises to the cytoplasm. The protein resides in the nucleus. The catalysed reaction is ATP + ubiquitin + [E1 ubiquitin-activating enzyme]-L-cysteine = AMP + diphosphate + S-ubiquitinyl-[E1 ubiquitin-activating enzyme]-L-cysteine.. The protein operates within protein modification; protein ubiquitination. Ubiquitin transfer between the E1 ubiquitin-activating enzyme ptr3 and E2 ubiquitin-conjugating enzyme ubc4 is enhanced by the presence of magnesium and ATP, or adenylated ubiquitin. Its function is as follows. E1 ubiquitin-activating enzyme that catalyzes the first step in ubiquitin conjugation to mark cellular proteins for degradation through the ubiquitin-proteasome system. Activates ubiquitin by first adenylating its C-terminal glycine residue with ATP, and thereafter linking this residue to the side chain of a cysteine residue in E1, yielding a ubiquitin-E1 thioester and free AMP. This Schizosaccharomyces pombe (strain 972 / ATCC 24843) (Fission yeast) protein is Ubiquitin-activating enzyme E1 1 (ptr3).